The following is a 100-amino-acid chain: Aspartyl/glutamyl-tRNA(Asn/Gln) amidotransferase subunit C (100 aa).

It belongs to the GatC family. As to quaternary structure, heterotrimer of A, B and C subunits.

The catalysed reaction is L-glutamyl-tRNA(Gln) + L-glutamine + ATP + H2O = L-glutaminyl-tRNA(Gln) + L-glutamate + ADP + phosphate + H(+). The enzyme catalyses L-aspartyl-tRNA(Asn) + L-glutamine + ATP + H2O = L-asparaginyl-tRNA(Asn) + L-glutamate + ADP + phosphate + 2 H(+). In terms of biological role, allows the formation of correctly charged Asn-tRNA(Asn) or Gln-tRNA(Gln) through the transamidation of misacylated Asp-tRNA(Asn) or Glu-tRNA(Gln) in organisms which lack either or both of asparaginyl-tRNA or glutaminyl-tRNA synthetases. The reaction takes place in the presence of glutamine and ATP through an activated phospho-Asp-tRNA(Asn) or phospho-Glu-tRNA(Gln). This is Aspartyl/glutamyl-tRNA(Asn/Gln) amidotransferase subunit C from Staphylococcus carnosus (strain TM300).